Consider the following 239-residue polypeptide: Lactate utilization protein A (239 aa).

It belongs to the LutA/YkgE family.

Functionally, is involved in L-lactate degradation and allows cells to grow with lactate as the sole carbon source. This Bacillus cytotoxicus (strain DSM 22905 / CIP 110041 / 391-98 / NVH 391-98) protein is Lactate utilization protein A.